The following is a 436-amino-acid chain: ATP-dependent 6-phosphofructokinase (436 aa).

Residues glycine 90, 155–156 (RG), and 180–183 (GDGT) contribute to the ATP site. Aspartate 181 contributes to the Mg(2+) binding site. Substrate-binding positions include 209–211 (TID), 254–256 (MGR), glutamate 307, and 362–365 (YMIR). The Proton acceptor role is filled by aspartate 211.

It belongs to the phosphofructokinase type A (PFKA) family. PPi-dependent PFK group II subfamily. Atypical ATP-dependent clade 'X' sub-subfamily. In terms of assembly, homodimer. Aggregates to a homotetramer after activation by ATP. The cofactor is Mg(2+).

The protein resides in the cytoplasm. It catalyses the reaction beta-D-fructose 6-phosphate + ATP = beta-D-fructose 1,6-bisphosphate + ADP + H(+). It participates in carbohydrate degradation; glycolysis; D-glyceraldehyde 3-phosphate and glycerone phosphate from D-glucose: step 3/4. Activated by nucleoside triphosphates. Inhibited by phosphoenolpyruvate. EDTA and biphosphonates play the role of inhibitors of kinase activity. Functionally, catalyzes the phosphorylation of D-fructose 6-phosphate to fructose 1,6-bisphosphate by ATP, the first committing step of glycolysis. This is ATP-dependent 6-phosphofructokinase (PPi-PFK) from Entamoeba histolytica (strain ATCC 30459 / HM-1:IMSS / ABRM).